The primary structure comprises 212 residues: Kynurenine formamidase (212 aa).

Residue tryptophan 18 coordinates substrate. Residues histidine 48, histidine 52, and aspartate 54 each coordinate Zn(2+). The Proton donor/acceptor role is filled by histidine 58. Residues histidine 160 and glutamate 172 each coordinate Zn(2+).

This sequence belongs to the Cyclase 1 superfamily. KynB family. In terms of assembly, homodimer. Zn(2+) is required as a cofactor.

The catalysed reaction is N-formyl-L-kynurenine + H2O = L-kynurenine + formate + H(+). It participates in amino-acid degradation; L-tryptophan degradation via kynurenine pathway; L-kynurenine from L-tryptophan: step 2/2. Its function is as follows. Catalyzes the hydrolysis of N-formyl-L-kynurenine to L-kynurenine, the second step in the kynurenine pathway of tryptophan degradation. In Paraburkholderia xenovorans (strain LB400), this protein is Kynurenine formamidase.